We begin with the raw amino-acid sequence, 274 residues long: MPELPEVETSRRGIEPHLVGNILHYAIVRNSKLRWPVSEKIKTLLDEPILSVKRRAKYLLIELNQGWIIVHLGMSGSVRILPEEQPEEKHDHIDLVFRDGKVLRYTDPRRFGAWLWCEDLATSSVLAHLGPEPLSAQFNAQYLYQQSKNKKIAIKPWLMDNKLVVGVGNIYANEALFSSGIMPDRKASSLTEQECDVLVNAIKTVLTRSIEQGGTTLKDFLQSDGKPGYFAQELFVYGRKDKACLICGHTIESIKQGQRSTFFCRHCQHGEITD.

Catalysis depends on proline 2, which acts as the Schiff-base intermediate with DNA. Glutamate 3 acts as the Proton donor in catalysis. Residue lysine 57 is the Proton donor; for beta-elimination activity of the active site. The DNA site is built by histidine 90, arginine 109, and lysine 150. The FPG-type zinc-finger motif lies at 235–269 (FVYGRKDKACLICGHTIESIKQGQRSTFFCRHCQH). The active-site Proton donor; for delta-elimination activity is the arginine 259.

The protein belongs to the FPG family. As to quaternary structure, monomer. Zn(2+) serves as cofactor.

The enzyme catalyses Hydrolysis of DNA containing ring-opened 7-methylguanine residues, releasing 2,6-diamino-4-hydroxy-5-(N-methyl)formamidopyrimidine.. It carries out the reaction 2'-deoxyribonucleotide-(2'-deoxyribose 5'-phosphate)-2'-deoxyribonucleotide-DNA = a 3'-end 2'-deoxyribonucleotide-(2,3-dehydro-2,3-deoxyribose 5'-phosphate)-DNA + a 5'-end 5'-phospho-2'-deoxyribonucleoside-DNA + H(+). In terms of biological role, involved in base excision repair of DNA damaged by oxidation or by mutagenic agents. Acts as a DNA glycosylase that recognizes and removes damaged bases. Has a preference for oxidized purines, such as 7,8-dihydro-8-oxoguanine (8-oxoG). Has AP (apurinic/apyrimidinic) lyase activity and introduces nicks in the DNA strand. Cleaves the DNA backbone by beta-delta elimination to generate a single-strand break at the site of the removed base with both 3'- and 5'-phosphates. This Proteus mirabilis (strain HI4320) protein is Formamidopyrimidine-DNA glycosylase.